A 166-amino-acid polypeptide reads, in one-letter code: Small ribosomal subunit protein uS5 (166 aa).

The region spanning leucine 11 to valine 74 is the S5 DRBM domain.

Belongs to the universal ribosomal protein uS5 family. In terms of assembly, part of the 30S ribosomal subunit. Contacts proteins S4 and S8.

With S4 and S12 plays an important role in translational accuracy. In terms of biological role, located at the back of the 30S subunit body where it stabilizes the conformation of the head with respect to the body. The chain is Small ribosomal subunit protein uS5 from Enterobacter sp. (strain 638).